The chain runs to 390 residues: Leu/Ile/Val-binding protein homolog 6 (390 aa).

The N-terminal stretch at 1-21 (MKKIALTALAVFSLAASAAYA) is a signal peptide.

The protein belongs to the leucine-binding protein family.

In terms of biological role, component of an amino-acid transport system. The chain is Leu/Ile/Val-binding protein homolog 6 from Brucella abortus (strain 2308).